The sequence spans 488 residues: Ribulose bisphosphate carboxylase large chain (488 aa).

Asparagine 127 and threonine 177 together coordinate substrate. Lysine 179 acts as the Proton acceptor in catalysis. A substrate-binding site is contributed by lysine 181. 3 residues coordinate Mg(2+): lysine 205, aspartate 207, and glutamate 208. The residue at position 205 (lysine 205) is an N6-carboxylysine. The Proton acceptor role is filled by histidine 297. Substrate-binding residues include arginine 298, histidine 330, and serine 382.

It belongs to the RuBisCO large chain family. Type I subfamily. Heterohexadecamer of 8 large chains and 8 small chains. It depends on Mg(2+) as a cofactor.

Its subcellular location is the plastid. The protein resides in the chloroplast. It carries out the reaction 2 (2R)-3-phosphoglycerate + 2 H(+) = D-ribulose 1,5-bisphosphate + CO2 + H2O. It catalyses the reaction D-ribulose 1,5-bisphosphate + O2 = 2-phosphoglycolate + (2R)-3-phosphoglycerate + 2 H(+). Its function is as follows. RuBisCO catalyzes two reactions: the carboxylation of D-ribulose 1,5-bisphosphate, the primary event in carbon dioxide fixation, as well as the oxidative fragmentation of the pentose substrate in the photorespiration process. Both reactions occur simultaneously and in competition at the same active site. In Pyropia haitanensis (Red seaweed), this protein is Ribulose bisphosphate carboxylase large chain (rbcL).